Reading from the N-terminus, the 86-residue chain is Weak neurotoxin 6 (86 aa).

The first 21 residues, 1–21 (MKTLLLTLVVVTIVCLDLGYT), serve as a signal peptide directing secretion. Intrachain disulfides connect Cys24–Cys45, Cys27–Cys32, Cys38–Cys63, Cys67–Cys78, and Cys79–Cys84.

Belongs to the three-finger toxin family. Ancestral subfamily. Orphan group II sub-subfamily. As to expression, expressed by the venom gland.

The protein resides in the secreted. Binds with low affinity to muscular (alpha-1-beta-1-delta-epsilon/CHRNA1-CHRNB1-CHRND-CHRNE) and very low affinity to neuronal (alpha-7/CHRNA7) nicotinic acetylcholine receptor (nAChR). The protein is Weak neurotoxin 6 of Naja sputatrix (Malayan spitting cobra).